The primary structure comprises 123 residues: Small ribosomal subunit protein uS12 (123 aa).

A 3-methylthioaspartic acid modification is found at Asp90.

The protein belongs to the universal ribosomal protein uS12 family. As to quaternary structure, part of the 30S ribosomal subunit. Contacts proteins S8 and S17. May interact with IF1 in the 30S initiation complex.

Functionally, with S4 and S5 plays an important role in translational accuracy. Interacts with and stabilizes bases of the 16S rRNA that are involved in tRNA selection in the A site and with the mRNA backbone. Located at the interface of the 30S and 50S subunits, it traverses the body of the 30S subunit contacting proteins on the other side and probably holding the rRNA structure together. The combined cluster of proteins S8, S12 and S17 appears to hold together the shoulder and platform of the 30S subunit. The protein is Small ribosomal subunit protein uS12 of Ehrlichia ruminantium (strain Gardel).